Consider the following 1074-residue polypeptide: Phospholipase D1 (1074 aa).

One can recognise a PX domain in the interval 81–212; the sequence is VKAQVLEVER…TEFLDVSQLS (132 aa). The PH domain maps to 219–328; sequence PKGLEGMIMK…WGGAIEEFIQ (110 aa). S-palmitoyl cysteine attachment occurs at residues Cys-240 and Cys-241. In terms of domain architecture, PLD phosphodiesterase 1 spans 459 to 486; it reads YLWAHHEKLVIIDQSVAFVGGIDLAYGR. The catalytic stretch occupies residues 463 to 928; the sequence is HHEKLVIIDQ…MLGKRDSEMA (466 aa). Residues Ser-499, Ser-561, and Ser-629 each carry the phosphoserine modification. The region spanning 891 to 918 is the PLD phosphodiesterase 2 domain; the sequence is ELIYVHSKLLIADDNTVIIGSANINDRS.

Belongs to the phospholipase D family. Interacts with PIP5K1B. Post-translationally, phosphorylated on serine and threonine residues. It is uncertain whether palmitoylation is on Cys-240 and/or Cys-241. Palmitoylation is required prior to phosphorylation.

Its subcellular location is the cytoplasm. The protein localises to the perinuclear region. The protein resides in the endoplasmic reticulum membrane. It localises to the golgi apparatus membrane. It is found in the late endosome membrane. It carries out the reaction a 1,2-diacyl-sn-glycero-3-phosphocholine + H2O = a 1,2-diacyl-sn-glycero-3-phosphate + choline + H(+). The catalysed reaction is ethanol + a 1,2-diacyl-sn-glycero-3-phosphocholine = 1,2-diacyl-sn-glycero-3-phosphoethanol + choline. The enzyme catalyses 1,2-dihexadecanoyl-sn-glycero-3-phosphocholine + H2O = 1,2-dihexadecanoyl-sn-glycero-3-phosphate + choline + H(+). With respect to regulation, stimulated by phosphatidylinositol 4,5-bisphosphate and phosphatidylinositol 3,4,5-trisphosphate, activated by the phosphokinase C-alpha, by the ADP-ribosylation factor-1 (ARF-1), and to a lesser extent by GTP-binding proteins: RHO A, RAC-1 and CDC42. Inhibited by oleate. In terms of biological role, function as phospholipase selective for phosphatidylcholine. Implicated as a critical step in numerous cellular pathways, including signal transduction, membrane trafficking, and the regulation of mitosis. May be involved in the regulation of perinuclear intravesicular membrane traffic. This Rattus norvegicus (Rat) protein is Phospholipase D1.